The sequence spans 31 residues: Bacteriocin lactocin-705 (31 aa).

Functionally, antibacterial activity against several lactic acid bacteria, Listeria, Streptococci, etc. The chain is Bacteriocin lactocin-705 from Lacticaseibacillus paracasei (Lactobacillus paracasei).